The sequence spans 205 residues: Probable 3'-5' exonuclease KapD (205 aa).

Residues 6-173 form the Exonuclease domain; sequence LLIIDFEFTM…DDALTAYKLF (168 aa). The Mg(2+) site is built by Asp-10, Glu-12, and Asp-104. Glu-12 acts as the Proton acceptor in catalysis. Residue Glu-12 coordinates AMP. The active-site Proton acceptor is His-160. AMP is bound at residue His-160. Position 165 (Asp-165) interacts with Mg(2+).

Mg(2+) serves as cofactor.

Its function is as follows. Specifically inhibits the KinA pathway to sporulation. The protein is Probable 3'-5' exonuclease KapD (kapD) of Bacillus subtilis (strain 168).